Here is a 381-residue protein sequence, read N- to C-terminus: Opsin Rh2 (381 aa).

Residues 1–56 (MERSLLPEPPLAMALLGPRFEAQTGGNRSVLDNVLPDMAPLVNPYWSRFAPMDPTM) are Extracellular-facing. N27 is a glycosylation site (N-linked (GlcNAc...) asparagine). Residues 57-81 (SKILGLFTLVILIISCCGNGVVVYI) traverse the membrane as a helical segment. Topologically, residues 82–93 (FGGTKSLRTPAN) are cytoplasmic. The helical transmembrane segment at 94–119 (LLVLNLAFSDFCMMASQSPVMIINFY) threads the bilayer. Residues 120–133 (YETWVLGPLWCDIY) lie on the Extracellular side of the membrane. C130 and C207 are oxidised to a cystine. Residues 134-153 (AACGSLFGCVSIWSMCMIAF) traverse the membrane as a helical segment. Topologically, residues 154-172 (DRYNVIVKGINGTPMTIKT) are cytoplasmic. The helical transmembrane segment at 173-196 (SIMKIAFIWMMAVFWTIMPLIGWS) threads the bilayer. Over 197 to 220 (SYVPEGNLTACSIDYMTRQWNPRS) the chain is Extracellular. The helical transmembrane segment at 221–248 (YLITYSLFVYYTPLFMICYSYWFIIATV) threads the bilayer. Topologically, residues 249–283 (AAHEKAMRDQAKKMNVKSLRSSEDCDKSAENKLAK) are cytoplasmic. The helical transmembrane segment at 284–307 (VALTTISLWFMAWTPYLIICYFGL) threads the bilayer. Over 308-314 (FKIDGLT) the chain is Extracellular. A helical transmembrane segment spans residues 315-339 (PLTTIWGATFAKTSAVYNPIVYGIS). N6-(retinylidene)lysine is present on K326. Residues 340 to 381 (HPKYRLVLKEKCPMCVCGSTDEPKPDAPPSDTETTSEAESKA) lie on the Cytoplasmic side of the membrane. Residues 358–381 (STDEPKPDAPPSDTETTSEAESKA) form a disordered region. The span at 370-381 (DTETTSEAESKA) shows a compositional bias: polar residues.

It belongs to the G-protein coupled receptor 1 family. Opsin subfamily. In terms of processing, some or all of the Ser/Thr residues present in the C-terminal part may be phosphorylated.

It is found in the membrane. In terms of biological role, visual pigments are the light-absorbing molecules that mediate vision. They consist of an apoprotein, opsin, covalently linked to cis-retinal. The sequence is that of Opsin Rh2 (Rh2) from Drosophila pseudoobscura pseudoobscura (Fruit fly).